The following is a 77-amino-acid chain: P fimbrial regulatory protein KS71A (77 aa).

This Escherichia coli protein is P fimbrial regulatory protein KS71A (KS71A).